Reading from the N-terminus, the 367-residue chain is Developmentally-regulated GTP-binding protein 1 (367 aa).

Residues 2-16 (SGTLARIAEIEAEMA) form a required for interaction with STK16 region. Residues 65–290 (ARIGFVGFPS…LLEKIWDYLQ (226 aa)) enclose the OBG-type G domain. GTP is bound by residues 71–78 (GFPSVGKS), 96–100 (FTTLT), 117–120 (DLPG), 248–251 (NKID), and 271–273 (SAH). 2 residues coordinate Mg(2+): serine 78 and threonine 98. In terms of domain architecture, TGS spans 290 to 366 (QLVRIYTKPK…EDEDVIQIVK (77 aa)).

This sequence belongs to the TRAFAC class OBG-HflX-like GTPase superfamily. OBG GTPase family. Mg(2+) is required as a cofactor. K(+) serves as cofactor. As to expression, expressed in many adult amd embryonic tissues. In adults, highest levels in ovaries and testes, followed by skeletal muscle, stomach, brain, kidney and liver. Weak expression in heart and brain.

It is found in the nucleus. It localises to the cytoplasm. The catalysed reaction is GTP + H2O = GDP + phosphate + H(+). Its function is as follows. Catalyzes the conversion of GTP to GDP through hydrolysis of the gamma-phosphate bond in GTP. Binds to microtubules and promotes microtubule polymerization and bundling. GTPase activity is not necessary for these microtubule-related functions. The polypeptide is Developmentally-regulated GTP-binding protein 1 (drg1) (Xenopus laevis (African clawed frog)).